Reading from the N-terminus, the 256-residue chain is NAP1-related protein 1 (256 aa).

Residues 23–64 (IDAELVLSIEKLQEIQDDLEKINEKASDEVLEVEQKYNVIRK) are a coiled coil. Residues 220–256 (LTYFNNDADEEDFDGDDDGDEEGEEDDDDEEEEDGEE) are disordered. Residues 226 to 256 (DADEEDFDGDDDGDEEGEEDDDDEEEEDGEE) show a composition bias toward acidic residues.

The protein belongs to the nucleosome assembly protein (NAP) family. Can form homomeric and heteromeric protein complexes with NRP2. Binds histones H2A and H2B and associates with chromatin in vivo. As to expression, ubiquitous.

Its subcellular location is the cytoplasm. It localises to the nucleus. Functionally, acts as a histone H2A/H2B chaperone in nucleosome assembly, playing a critical role for the correct expression of genes involved in root proliferation and patterning. Required with NRP2 for the maintenance of cell proliferation and differentiation in postembryonic root growth. Involved in both intramolecular and intermolecular somatic homologous recombination. The polypeptide is NAP1-related protein 1 (NRP1) (Arabidopsis thaliana (Mouse-ear cress)).